The following is a 107-amino-acid chain: Phosphoribosyl-ATP pyrophosphatase (107 aa).

This sequence belongs to the PRA-PH family.

The protein resides in the cytoplasm. It carries out the reaction 1-(5-phospho-beta-D-ribosyl)-ATP + H2O = 1-(5-phospho-beta-D-ribosyl)-5'-AMP + diphosphate + H(+). It functions in the pathway amino-acid biosynthesis; L-histidine biosynthesis; L-histidine from 5-phospho-alpha-D-ribose 1-diphosphate: step 2/9. In Azoarcus sp. (strain BH72), this protein is Phosphoribosyl-ATP pyrophosphatase.